The following is a 304-amino-acid chain: 1D-myo-inositol 2-acetamido-2-deoxy-alpha-D-glucopyranoside deacetylase 2 (304 aa).

Positions 17, 20, and 152 each coordinate Zn(2+).

This sequence belongs to the MshB deacetylase family. It depends on Zn(2+) as a cofactor.

The enzyme catalyses 1D-myo-inositol 2-acetamido-2-deoxy-alpha-D-glucopyranoside + H2O = 1D-myo-inositol 2-amino-2-deoxy-alpha-D-glucopyranoside + acetate. Catalyzes the deacetylation of 1D-myo-inositol 2-acetamido-2-deoxy-alpha-D-glucopyranoside (GlcNAc-Ins) in the mycothiol biosynthesis pathway. The sequence is that of 1D-myo-inositol 2-acetamido-2-deoxy-alpha-D-glucopyranoside deacetylase 2 from Catenulispora acidiphila (strain DSM 44928 / JCM 14897 / NBRC 102108 / NRRL B-24433 / ID139908).